Consider the following 290-residue polypeptide: MDKIIKSIAQSGAFRAYVLDSTETVALAQEKHNTLSSSTVALGRTLIANQILAANQKGDSKITVKVIGDSSFGHIISVADTKGHVKGYIQNTGVDIKKTATGEVLVGPFMGNGHFVTIIDYGTGNPYTSTTPLITGEIGEDFAYYLTESEQTPSAIGLNVLLDENDKVKVAGGFMVQVLPGASEEEIARYEKRLQEMPAISHLLASKNHVDALLEAICGDEPYKRLSEEPLSFQCDCSRERFEAALMTLPKADLQAMIDEDKGAEIVCQFCGTKYQFNESDLEAIINDKA.

2 disulfide bridges follow: cysteine 235–cysteine 237 and cysteine 268–cysteine 271.

Belongs to the HSP33 family. Under oxidizing conditions two disulfide bonds are formed involving the reactive cysteines. Under reducing conditions zinc is bound to the reactive cysteines and the protein is inactive.

The protein localises to the cytoplasm. Redox regulated molecular chaperone. Protects both thermally unfolding and oxidatively damaged proteins from irreversible aggregation. Plays an important role in the bacterial defense system toward oxidative stress. The protein is 33 kDa chaperonin of Streptococcus pyogenes serotype M6 (strain ATCC BAA-946 / MGAS10394).